Here is a 516-residue protein sequence, read N- to C-terminus: Cysteine--tRNA ligase (516 aa).

Cysteine 34 provides a ligand contact to Zn(2+). Residues 36-46 carry the 'HIGH' region motif; it reads PTVYNFAHLGN. The Zn(2+) site is built by cysteine 225, histidine 250, and glutamate 254. The 'KMSKS' region signature appears at 285–289; it reads KMSKS. Lysine 288 serves as a coordination point for ATP.

It belongs to the class-I aminoacyl-tRNA synthetase family. Monomer. Zn(2+) serves as cofactor.

It is found in the cytoplasm. It catalyses the reaction tRNA(Cys) + L-cysteine + ATP = L-cysteinyl-tRNA(Cys) + AMP + diphosphate. The chain is Cysteine--tRNA ligase from Zymomonas mobilis subsp. mobilis (strain ATCC 31821 / ZM4 / CP4).